Reading from the N-terminus, the 275-residue chain is 4-diphosphocytidyl-2-C-methyl-D-erythritol kinase (275 aa).

K14 is a catalytic residue. Position 98 to 108 (98 to 108 (PMGAGLGGGSS)) interacts with ATP. The active site involves D140.

The protein belongs to the GHMP kinase family. IspE subfamily.

It catalyses the reaction 4-CDP-2-C-methyl-D-erythritol + ATP = 4-CDP-2-C-methyl-D-erythritol 2-phosphate + ADP + H(+). The protein operates within isoprenoid biosynthesis; isopentenyl diphosphate biosynthesis via DXP pathway; isopentenyl diphosphate from 1-deoxy-D-xylulose 5-phosphate: step 3/6. In terms of biological role, catalyzes the phosphorylation of the position 2 hydroxy group of 4-diphosphocytidyl-2C-methyl-D-erythritol. The sequence is that of 4-diphosphocytidyl-2-C-methyl-D-erythritol kinase from Francisella tularensis subsp. tularensis (strain WY96-3418).